The sequence spans 147 residues: Large ribosomal subunit protein uL11 (147 aa).

It belongs to the universal ribosomal protein uL11 family. In terms of assembly, part of the ribosomal stalk of the 50S ribosomal subunit. Interacts with L10 and the large rRNA to form the base of the stalk. L10 forms an elongated spine to which L12 dimers bind in a sequential fashion forming a multimeric L10(L12)X complex. In terms of processing, one or more lysine residues are methylated.

Forms part of the ribosomal stalk which helps the ribosome interact with GTP-bound translation factors. This Parabacteroides distasonis (strain ATCC 8503 / DSM 20701 / CIP 104284 / JCM 5825 / NCTC 11152) protein is Large ribosomal subunit protein uL11.